The primary structure comprises 1224 residues: Serine/threonine-protein kinase CST20 (1224 aa).

Polar residues predominate over residues 1–18 (MSILSENNPTPTSITDPN). Disordered stretches follow at residues 1–378 (MSIL…TAHN) and 403–464 (TNSS…HSQE). Low complexity-rich tracts occupy residues 57–70 (NTTSANTSSLSLGS) and 95–119 (DSGSGDIDDSQQSHNNNNNESNPES). Basic and acidic residues predominate over residues 144–155 (HQGDDSDNEKQY). Composition is skewed to polar residues over residues 169-191 (DSYSLGTLESPGTLNALETNNVS), 201-218 (TSSLEDLSLSLQHQNENA), and 231-240 (PTSKTSSFHD). The segment covering 242 to 251 (SSVISSSTSV) has biased composition (low complexity). Composition is skewed to polar residues over residues 256-271 (SNPTSTRGSHLSSYKS) and 305-324 (DTLSSATNSPNLLRNDTLQG). Low complexity-rich tracts occupy residues 343–375 (NTSATSRNTSGTSTSTVVKNSRSGTSKSTSTST) and 433–462 (KVRGVFSSMFGKNKSTSSSSSSNSGSNSHS). The CRIB domain occupies 469 to 482 (ISTPFNAKHLAHVG). Disordered stretches follow at residues 539–825 (FHFD…ALAD) and 861–913 (LREK…KQAA). The segment covering 544–555 (NKSSSSGWSNEN) has biased composition (polar residues). Over residues 564-575 (SNSGSGSGGGGA) the composition is skewed to gly residues. The segment covering 598-607 (ITPSQSMPTK) has biased composition (polar residues). Residues 608–622 (TESKQSENQHPHEDN) are compositionally biased toward basic and acidic residues. Residues 623-636 (ATQYTPRTPTSHVQ) are compositionally biased toward polar residues. Composition is skewed to low complexity over residues 664-677 (PSSQSLPRSDSQSD), 690-704 (SPSKIKIRSISSKSL), and 730-743 (SIPKSKSHSASLSS). A compositionally biased stretch (polar residues) spans 744 to 755 (QLRPATNGSTTA). Over residues 783–801 (APPPPPSAPPAPPVPPAPP) the composition is skewed to pro residues. Polar residues predominate over residues 805-820 (LSEQTSEIPQQRTAPS). Over residues 861–870 (LREKNERQNR) the composition is skewed to basic and acidic residues. Positions 871 to 886 (QQETGQNNADTASGGS) are enriched in polar residues. Positions 947–1199 (YVDLVKIGQG…ADELLHDNFI (253 aa)) constitute a Protein kinase domain. ATP is bound by residues 953-961 (IGQGASGGV) and lysine 977. Residue aspartate 1067 is the Proton acceptor of the active site.

The protein belongs to the protein kinase superfamily. STE Ser/Thr protein kinase family. STE20 subfamily.

It is found in the cytoplasm. It localises to the nucleus. It carries out the reaction L-seryl-[protein] + ATP = O-phospho-L-seryl-[protein] + ADP + H(+). The enzyme catalyses L-threonyl-[protein] + ATP = O-phospho-L-threonyl-[protein] + ADP + H(+). In terms of biological role, MAP4K component of the MAPK pathway required for the mating pheromone response, and the regulation of cell polarity and cell cycle. Phosphorylates histone H2B to form H2BS10ph. Required for hyphal formation and virulence. The protein is Serine/threonine-protein kinase CST20 (CST20) of Candida albicans (strain WO-1) (Yeast).